Reading from the N-terminus, the 230-residue chain is Putative transcription factor bHLH107 (230 aa).

One can recognise a bHLH domain in the interval 44–93 (ASLRNHKEAERKRRARINSHLNKLRKLLSCNSKTDKSTLLAKVVQRVKEL).

In terms of assembly, homodimer.

Its subcellular location is the nucleus. In Arabidopsis thaliana (Mouse-ear cress), this protein is Putative transcription factor bHLH107 (BHLH107).